The chain runs to 216 residues: Pyrrolidone-carboxylate peptidase (216 aa).

Active-site residues include Glu80, Cys143, and His168.

It belongs to the peptidase C15 family. Homotetramer.

The protein localises to the cytoplasm. The catalysed reaction is Release of an N-terminal pyroglutamyl group from a polypeptide, the second amino acid generally not being Pro.. Removes 5-oxoproline from various penultimate amino acid residues except L-proline. The sequence is that of Pyrrolidone-carboxylate peptidase from Cupriavidus pinatubonensis (strain JMP 134 / LMG 1197) (Cupriavidus necator (strain JMP 134)).